The following is a 154-amino-acid chain: Methylglyoxal synthase (154 aa).

The MGS-like domain maps to 1-154 (MELTTRTIAA…RYMQQRLDLK (154 aa)). Residues His-19, Lys-23, 45–48 (TGTT), and 65–66 (SG) each bind substrate. Asp-71 functions as the Proton donor/acceptor in the catalytic mechanism. His-98 is a binding site for substrate.

The protein belongs to the methylglyoxal synthase family.

The enzyme catalyses dihydroxyacetone phosphate = methylglyoxal + phosphate. Catalyzes the formation of methylglyoxal from dihydroxyacetone phosphate. The protein is Methylglyoxal synthase of Yersinia pseudotuberculosis serotype O:1b (strain IP 31758).